Reading from the N-terminus, the 310-residue chain is ATP-dependent protease (310 aa).

An Integrase catalytic domain is found at 24–186 (RLNQCFFKFK…TPNQKEENYF (163 aa)).

The sequence is that of ATP-dependent protease from Lactococcus lactis subsp. lactis (Streptococcus lactis).